The sequence spans 213 residues: Thiamine-phosphate synthase (213 aa).

Residues 38 to 42 and asparagine 70 contribute to the 4-amino-2-methyl-5-(diphosphooxymethyl)pyrimidine site; that span reads QLRIK. Mg(2+) is bound by residues aspartate 71 and aspartate 90. A 4-amino-2-methyl-5-(diphosphooxymethyl)pyrimidine-binding site is contributed by serine 109. 135-137 is a 2-[(2R,5Z)-2-carboxy-4-methylthiazol-5(2H)-ylidene]ethyl phosphate binding site; that stretch reads TQT. Lysine 138 contacts 4-amino-2-methyl-5-(diphosphooxymethyl)pyrimidine. 2-[(2R,5Z)-2-carboxy-4-methylthiazol-5(2H)-ylidene]ethyl phosphate contacts are provided by residues glycine 168 and 188-189; that span reads VS.

The protein belongs to the thiamine-phosphate synthase family. Requires Mg(2+) as cofactor.

It catalyses the reaction 2-[(2R,5Z)-2-carboxy-4-methylthiazol-5(2H)-ylidene]ethyl phosphate + 4-amino-2-methyl-5-(diphosphooxymethyl)pyrimidine + 2 H(+) = thiamine phosphate + CO2 + diphosphate. The enzyme catalyses 2-(2-carboxy-4-methylthiazol-5-yl)ethyl phosphate + 4-amino-2-methyl-5-(diphosphooxymethyl)pyrimidine + 2 H(+) = thiamine phosphate + CO2 + diphosphate. It carries out the reaction 4-methyl-5-(2-phosphooxyethyl)-thiazole + 4-amino-2-methyl-5-(diphosphooxymethyl)pyrimidine + H(+) = thiamine phosphate + diphosphate. It participates in cofactor biosynthesis; thiamine diphosphate biosynthesis; thiamine phosphate from 4-amino-2-methyl-5-diphosphomethylpyrimidine and 4-methyl-5-(2-phosphoethyl)-thiazole: step 1/1. In terms of biological role, condenses 4-methyl-5-(beta-hydroxyethyl)thiazole monophosphate (THZ-P) and 2-methyl-4-amino-5-hydroxymethyl pyrimidine pyrophosphate (HMP-PP) to form thiamine monophosphate (TMP). The protein is Thiamine-phosphate synthase of Pectobacterium atrosepticum (strain SCRI 1043 / ATCC BAA-672) (Erwinia carotovora subsp. atroseptica).